Consider the following 85-residue polypeptide: MATKKAGGSTKNGRDSNPKMLGVKVYGGQTVTAGNIIVRQRGTEFHAGANVGMGRDHTLFATADGVVKFEVKGQFGRRYVKVETV.

A disordered region spans residues 1–20; that stretch reads MATKKAGGSTKNGRDSNPKM.

This sequence belongs to the bacterial ribosomal protein bL27 family.

This Acinetobacter baumannii (strain AB307-0294) protein is Large ribosomal subunit protein bL27.